The sequence spans 1368 residues: Alpha-latrotoxin-Lg1a (1368 aa).

Residues 217–236 are helix H8 is the probable transmembrane region of the tetrameric pore inserted in the target cell membrane; that stretch reads VLYAILYGTQTYVSVMFFLL. Cys392 and Cys1044 are joined by a disulfide. ANK repeat units follow at residues 469–500, 504–533, 538–568, 572–601, 605–635, 639–669, 674–704, 708–737, 741–770, 774–803, 807–837, 841–870, 874–903, 907–936, 953–981, 982–1011, 1013–1042, 1046–1075, 1079–1109, and 1115–1144; these read QGRT…DINQ, KGYT…SVNS, FLQT…NINE, DGFT…DVNV, KGLT…DINA, NNMT…NANA, GLLS…NYNL, GDIT…NINQ, EKYT…NLEA, TGAT…NWRE, NGQM…VLDI, NLDT…KVNT, KGQA…NVYI, DGLN…KFEW, ISHF…GHYS, ICSP…SVDG, KPDT…KVNH, NGMT…DFRR, LDAT…NINI, and NKET…DENI. A furin-like endopeptidase recognition region region spans residues 1174–1177; it reads KFRR. A propeptide spanning residues 1178-1368 is cleaved from the precursor; the sequence is EYKSSNGEHD…GETLHLFHES (191 aa).

The protein belongs to the cationic peptide 01 (latrotoxin) family. 03 (alpha-latrotoxin) subfamily. As to quaternary structure, homotetramer in membranes. In terms of tissue distribution, expressed in venom gland, cephalothorax, and abdomen tissues from both males and females.

The protein localises to the secreted. Its subcellular location is the target cell membrane. Its function is as follows. Presynaptic neurotoxin that causes massive release of neurotransmitters from vertebrate (but not invertebrate) nerve terminals and endocrine cells via a complex mechanism involving activation of receptor(s) and toxin insertion into the plasma membrane with subsequent pore formation. Binds to neurexin-1-alpha (NRXN1) in a calcium dependent manner, adhesion G protein-coupled receptor L1 (ADGRL1, also termed latrophilin-1 and calcium-independent receptor of latrotoxin (CIRL)), and receptor-type tyrosine-protein phosphatase S (PTPRS), also termed PTP sigma. NRXN1 and PTPRS are suggested to provide a platform for binding and subsequent pore formation events. In contrast, binding to ADGRL1 does not involve oligomerization and channel formation, but direct downstream stimulation of the synaptic fusion machinery. The sequence is that of Alpha-latrotoxin-Lg1a from Latrodectus geometricus (Brown widow spider).